Consider the following 479-residue polypeptide: ATP synthase subunit beta (479 aa).

Glycine 168 to threonine 175 serves as a coordination point for ATP.

It belongs to the ATPase alpha/beta chains family. F-type ATPases have 2 components, CF(1) - the catalytic core - and CF(0) - the membrane proton channel. CF(1) has five subunits: alpha(3), beta(3), gamma(1), delta(1), epsilon(1). CF(0) has three main subunits: a(1), b(2) and c(9-12). The alpha and beta chains form an alternating ring which encloses part of the gamma chain. CF(1) is attached to CF(0) by a central stalk formed by the gamma and epsilon chains, while a peripheral stalk is formed by the delta and b chains.

The protein resides in the cell membrane. It catalyses the reaction ATP + H2O + 4 H(+)(in) = ADP + phosphate + 5 H(+)(out). In terms of biological role, produces ATP from ADP in the presence of a proton gradient across the membrane. The catalytic sites are hosted primarily by the beta subunits. The sequence is that of ATP synthase subunit beta from Parafrankia sp. (strain EAN1pec).